The primary structure comprises 256 residues: DNA repair protein RecO (256 aa).

Belongs to the RecO family.

Functionally, involved in DNA repair and RecF pathway recombination. This is DNA repair protein RecO from Streptococcus pneumoniae (strain Hungary19A-6).